A 1462-amino-acid chain; its full sequence is Copper-transporting ATPase 2 (1462 aa).

The segment at methionine 1 to lysine 23 is disordered. The Cytoplasmic segment spans residues methionine 1–serine 655. HMA domains follow at residues alanine 68–serine 134, alanine 153–alanine 219, alanine 267–phenylalanine 333, and arginine 361–serine 427. Positions 79, 82, 164, 167, 278, and 281 each coordinate Cu(+). The tract at residues phenylalanine 333–arginine 361 is disordered. Residue cysteine 372 participates in Cu(+) binding. The tract at residues lysine 460–threonine 487 is disordered. The span at glycine 475 to threonine 487 shows a compositional bias: polar residues. 2 positions are modified to phosphoserine: serine 478 and serine 483. 2 HMA domains span residues glutamine 490–serine 556 and glycine 566–serine 632. The Cu(+) site is built by cysteine 501, cysteine 504, cysteine 577, and cysteine 580. A helical transmembrane segment spans residues phenylalanine 656–serine 677. Residues serine 678–leucine 699 lie on the Extracellular side of the membrane. A helical membrane pass occupies residues isoleucine 700 to glutamine 719. Topologically, residues alanine 720–histidine 726 are cytoplasmic. The chain crosses the membrane as a helical span at residues arginine 727–leucine 747. The Extracellular portion of the chain corresponds to valine 748–phenylalanine 766. A helical membrane pass occupies residues aspartate 767 to lysine 787. The Cytoplasmic segment spans residues serine 788 to arginine 921. A helical membrane pass occupies residues phenylalanine 922–isoleucine 944. The Extracellular segment spans residues glycine 945–phenylalanine 974. The chain crosses the membrane as a helical span at residues glutamine 975–alanine 996. Topologically, residues valine 997–arginine 1319 are cytoplasmic. Aspartate 1029 serves as the catalytic 4-aspartylphosphate intermediate. Positions 1264 and 1268 each coordinate Mg(2+). The helical transmembrane segment at valine 1320–alanine 1337 threads the bilayer. The Extracellular segment spans residues glycine 1338–glutamine 1348. The helical transmembrane segment at proline 1349–leucine 1368 threads the bilayer. Residues glutamine 1369–isoleucine 1462 lie on the Cytoplasmic side of the membrane. A phosphoserine mark is found at serine 1395 and serine 1454.

Belongs to the cation transport ATPase (P-type) (TC 3.A.3) family. Type IB subfamily. Monomer. Interacts with COMMD1/MURR1. Interacts with DCTN4, in a copper-dependent manner. Interacts with ATOX1. Interacts (via C-terminus) with ZBTB16/PLZF. As to expression, detected in liver and kidney.

The protein localises to the golgi apparatus. Its subcellular location is the trans-Golgi network membrane. The protein resides in the late endosome. It carries out the reaction Cu(+)(in) + ATP + H2O = Cu(+)(out) + ADP + phosphate + H(+). In terms of biological role, copper ion transmembrane transporter involved in the export of copper out of the cells, such as the efflux of hepatic copper into the bile. The polypeptide is Copper-transporting ATPase 2 (Atp7b) (Mus musculus (Mouse)).